We begin with the raw amino-acid sequence, 119 residues long: Large ribosomal subunit protein bL20 (119 aa).

This sequence belongs to the bacterial ribosomal protein bL20 family.

Functionally, binds directly to 23S ribosomal RNA and is necessary for the in vitro assembly process of the 50S ribosomal subunit. It is not involved in the protein synthesizing functions of that subunit. The sequence is that of Large ribosomal subunit protein bL20 from Shouchella clausii (strain KSM-K16) (Alkalihalobacillus clausii).